The chain runs to 61 residues: Rubredoxin 3 (61 aa).

One can recognise a Rubredoxin-like domain in the interval 1–53 (MSSYRCPVCEYVYDESKGAPREGFPAGTPWDAVPDDWCCPDCGVREKLDFEPM). Fe cation contacts are provided by C6, C9, C39, and C42.

It belongs to the rubredoxin family. Fe(3+) is required as a cofactor.

Its function is as follows. Involved in the hydrocarbon hydroxylating system, which transfers electrons from NADH to rubredoxin reductase and then through rubredoxin to alkane 1 monooxygenase. The protein is Rubredoxin 3 (rubA3) of Rhodococcus erythropolis (Arthrobacter picolinophilus).